The primary structure comprises 460 residues: Argininosuccinate lyase (460 aa).

It belongs to the lyase 1 family. Argininosuccinate lyase subfamily.

The protein localises to the cytoplasm. The catalysed reaction is 2-(N(omega)-L-arginino)succinate = fumarate + L-arginine. It participates in amino-acid biosynthesis; L-arginine biosynthesis; L-arginine from L-ornithine and carbamoyl phosphate: step 3/3. This Campylobacter jejuni subsp. doylei (strain ATCC BAA-1458 / RM4099 / 269.97) protein is Argininosuccinate lyase.